The primary structure comprises 2230 residues: Golgin subfamily A member 4 (2230 aa).

Residues 1-64 (MFKKLKQKIS…SGDTQSFAQK (64 aa)) are disordered. Ser-10 is subject to Phosphoserine. The span at 12 to 41 (EQQQLQQALAPAQASSNSSTPTRMRSRTSS) shows a compositional bias: low complexity. A Phosphothreonine modification is found at Thr-39. Ser-41, Ser-71, Ser-78, and Ser-89 each carry phosphoserine. A compositionally biased stretch (basic and acidic residues) spans 87–107 (SSSKESLVRTSSRESLNRLDL). The tract at residues 87–127 (SSSKESLVRTSSRESLNRLDLDSSTASFDPPSDMDSEAEDL) is disordered. The interval 133-203 (SLNKEQLIQR…EELQMDQQAK (71 aa)) is interaction with MACF1. Residues 133–2185 (SLNKEQLIQR…EYLRKVLFEY (2053 aa)) are a coiled coil. Ser-266 carries the phosphoserine modification. N-linked (GlcNAc...) asparagine glycans are attached at residues Asn-585 and Asn-1612. The 48-residue stretch at 2168–2215 (LFGEPTEFEYLRKVLFEYMMGRETKTMAKVITTVLKFPDDQTQKILER) folds into the GRIP domain. Phosphothreonine is present on Thr-2223.

Homodimer. Interacts with RAB6A. Interacts with GTP-bound ARL1 and ARL3. Interacts with MACF1. Directly interacts with TBC1D23. Interacts with FAM91A1; this interaction may be mediated by TBC1D23.

The protein localises to the cytoplasm. It localises to the golgi apparatus membrane. It is found in the golgi apparatus. The protein resides in the trans-Golgi network membrane. Its function is as follows. Involved in vesicular trafficking at the Golgi apparatus level. May play a role in delivery of transport vesicles containing GPI-linked proteins from the trans-Golgi network through its interaction with MACF1. Involved in endosome-to-Golgi trafficking. This is Golgin subfamily A member 4 (GOLGA4) from Homo sapiens (Human).